The chain runs to 374 residues: Peptidoglycan recognition protein 4 (374 aa).

An N-terminal signal peptide occupies residues 1–20 (MLSWLLVFSILVLLAQGVSS). N-linked (GlcNAc...) asparagine glycans are attached at residues N39, N93, and N146. 2 N-acetylmuramoyl-L-alanine amidase domains span residues 76–212 (RPVD…KACP) and 233–359 (PAKY…LSPG). 3 disulfides stabilise this stretch: C211–C333, C227–C271, and C247–C253. Residue Y275 participates in peptidoglycan binding. 2 interaction with murein regions span residues 294–303 (QGSKTDSYND) and 354–355 (NT).

It belongs to the N-acetylmuramoyl-L-alanine amidase 2 family. In terms of assembly, homodimer; disulfide-linked. Heterodimer with PGLYRP3; disulfide-linked. Ubiquitous.

It is found in the secreted. Its function is as follows. Pattern receptor that binds to murein peptidoglycans (PGN) of Gram-positive bacteria. Has bactericidal activity towards Gram-positive bacteria. May kill Gram-positive bacteria by interfering with peptidoglycan biosynthesis. Also binds to Gram-negative bacteria, and has bacteriostatic activity towards Gram-negative bacteria. Plays a role in innate immunity. The polypeptide is Peptidoglycan recognition protein 4 (Pglyrp4) (Mus musculus (Mouse)).